A 723-amino-acid polypeptide reads, in one-letter code: Transmembrane channel-like protein 7 (723 aa).

2 disordered regions span residues 1 to 28 and 51 to 71; these read MSESSGSALQPGRPSRQPAVHPENLSLD and RRRTTVHSRDKQSGTLLKPTD. Over 1–168 the chain is Extracellular; the sequence is MSESSGSALQ…GIQSYFSFLR (168 aa). An N-linked (GlcNAc...) asparagine glycan is attached at Asn-24. Asn-84 carries N-linked (GlcNAc...) asparagine glycosylation. Ser-89 carries the phosphoserine modification. N-linked (GlcNAc...) asparagine glycosylation is present at Asn-96. Residues 169–189 form a helical membrane-spanning segment; the sequence is FLVLLNLVIFLIIFMLVLLPV. Residues 190-219 lie on the Cytoplasmic side of the membrane; that stretch reads LLTKYKITNSSFVLIPFKDMDKQCTVYPVS. Residues 220–240 form a helical membrane-spanning segment; sequence SSGLIYFYSYIIDLLSGTGFL. The Extracellular segment spans residues 241–263; the sequence is EETSLFYGHYTIDGVKFQNFTYD. N-linked (GlcNAc...) asparagine glycosylation is present at Asn-259. Residues 264-284 traverse the membrane as a helical segment; the sequence is LPLAYLLSTIASLALSLLWIV. Residues 285 to 362 are Cytoplasmic-facing; the sequence is KRSVEGFKIN…EETIRIYSLR (78 aa). A helical transmembrane segment spans residues 363 to 383; the sequence is LFLNCIVLAVLGACFYAIYVA. Residues 384–404 lie on the Extracellular side of the membrane; sequence TVFSQEHMKKEIDKMVFGENL. Residues 405–425 traverse the membrane as a helical segment; it reads FILYLPSIVITLANFITPMIF. At 426-494 the chain is on the cytoplasmic side; that stretch reads AKIIRYEDYS…PCWETQVGQE (69 aa). Residues 495–515 traverse the membrane as a helical segment; it reads MYKLMIFDFIIILAVTLFVDF. Residues 516–555 lie on the Extracellular side of the membrane; the sequence is PRKLLVTYCSSCKLIQCWGQQEFAIPDNVLGIVYGQTICW. Residues 556-576 form a helical membrane-spanning segment; the sequence is IGAFFSPLLPAIATLKFIIIF. Topologically, residues 577–601 are cytoplasmic; it reads YVKEWSLLYTCRPSPRPFRASNSNF. A helical transmembrane segment spans residues 602-622; that stretch reads FFLLVLLIGLCLAIIPLTISI. Residues 623-665 are Extracellular-facing; it reads SRIPSSKACGPFTNFNTTWEVIPKTVSTFPSSLQSFIHGVTSE. N-linked (GlcNAc...) asparagine glycosylation occurs at Asn-638. The chain crosses the membrane as a helical span at residues 666 to 686; sequence AFAVPFFMIICLIMFYFIALA. The Cytoplasmic portion of the chain corresponds to 687–723; that stretch reads GAHKRVVIQLREQLSLESRDKCYLIQKLTEAQRDMRN.

It belongs to the TMC family. In terms of assembly, interacts with PIEZO2; the interaction inhibits PIEZO2-conducted mechanically activated currents.

The protein resides in the membrane. Acts as an inhibitory modulator of PIEZO2 mechanosensitive channel in dorsal root ganglion (DRG) neurons through physical interactions or interference with the interaction between PIEZO2 and the cytoskeleton. In Homo sapiens (Human), this protein is Transmembrane channel-like protein 7.